The primary structure comprises 284 residues: 1D-myo-inositol 2-acetamido-2-deoxy-alpha-D-glucopyranoside deacetylase (284 aa).

H12, D15, and H146 together coordinate Zn(2+).

This sequence belongs to the MshB deacetylase family. Zn(2+) serves as cofactor.

The enzyme catalyses 1D-myo-inositol 2-acetamido-2-deoxy-alpha-D-glucopyranoside + H2O = 1D-myo-inositol 2-amino-2-deoxy-alpha-D-glucopyranoside + acetate. Catalyzes the deacetylation of 1D-myo-inositol 2-acetamido-2-deoxy-alpha-D-glucopyranoside (GlcNAc-Ins) in the mycothiol biosynthesis pathway. The chain is 1D-myo-inositol 2-acetamido-2-deoxy-alpha-D-glucopyranoside deacetylase from Mycolicibacterium vanbaalenii (strain DSM 7251 / JCM 13017 / BCRC 16820 / KCTC 9966 / NRRL B-24157 / PYR-1) (Mycobacterium vanbaalenii).